The chain runs to 412 residues: MIEEEILKIIKPTEEDKKGIEKVLEIIRERLNKLDFEVEGSFRKGTWLRQDTDIDVFVFYPKDVGKEYLERNALNDIINRIKDLDYTLAYAEHPYVIVNINNVEVDIVPALRVESGDKAITAVDRTPFHTKYVTSHLDERGKDEVRLLKRFMKGIGVYGAELKVQGFSGYATELLIIYYGNFRKVLEEASKWKHPIKIELTKPMKIFSEPLIIPDPVDPKRNVTAAVSLKNIATFSIAAKYYLKNPSIEFFFPSKKVEEKVKGDVLILRLNLDEKSSEDIVWGQIKRSVNKIERALKQYGFRVIDVQAWGDTNNITIAVQLESKNIGQYYLNIGPQYYSETIEDFIQKNDNIWVGEDGRLYSIKERKEYDAETIAKKNIVLKVKYNIESYWLQNKEDQQIMKFLRKTPTWLK.

2 residues coordinate ATP: S41 and K44. Residues S41 and K44 each coordinate CTP. Mg(2+)-binding residues include D53, D55, and D106. ATP-binding residues include H129, K149, and Y158. The CTP site is built by H129, K149, and Y158.

Belongs to the tRNA nucleotidyltransferase/poly(A) polymerase family. Archaeal CCA-adding enzyme subfamily. In terms of assembly, homodimer. The cofactor is Mg(2+).

The catalysed reaction is a tRNA precursor + 2 CTP + ATP = a tRNA with a 3' CCA end + 3 diphosphate. The enzyme catalyses a tRNA with a 3' CCA end + 2 CTP + ATP = a tRNA with a 3' CCACCA end + 3 diphosphate. Functionally, catalyzes the addition and repair of the essential 3'-terminal CCA sequence in tRNAs without using a nucleic acid template. Adds these three nucleotides in the order of C, C, and A to the tRNA nucleotide-73, using CTP and ATP as substrates and producing inorganic pyrophosphate. tRNA 3'-terminal CCA addition is required both for tRNA processing and repair. Also involved in tRNA surveillance by mediating tandem CCA addition to generate a CCACCA at the 3' terminus of unstable tRNAs. While stable tRNAs receive only 3'-terminal CCA, unstable tRNAs are marked with CCACCA and rapidly degraded. The chain is CCA-adding enzyme from Saccharolobus islandicus (strain Y.G.57.14 / Yellowstone #1) (Sulfolobus islandicus).